The sequence spans 286 residues: Digeranylgeranylglyceryl phosphate synthase (286 aa).

Transmembrane regions (helical) follow at residues A21–T41, T42–I62, F96–A116, L133–A155, F162–I181, V214–W234, Y235–D255, and R266–I286.

This sequence belongs to the UbiA prenyltransferase family. DGGGP synthase subfamily. Mg(2+) serves as cofactor.

It localises to the cell membrane. It catalyses the reaction sn-3-O-(geranylgeranyl)glycerol 1-phosphate + (2E,6E,10E)-geranylgeranyl diphosphate = 2,3-bis-O-(geranylgeranyl)-sn-glycerol 1-phosphate + diphosphate. The protein operates within membrane lipid metabolism; glycerophospholipid metabolism. Prenyltransferase that catalyzes the transfer of the geranylgeranyl moiety of geranylgeranyl diphosphate (GGPP) to the C2 hydroxyl of (S)-3-O-geranylgeranylglyceryl phosphate (GGGP). This reaction is the second ether-bond-formation step in the biosynthesis of archaeal membrane lipids. The polypeptide is Digeranylgeranylglyceryl phosphate synthase (Haloquadratum walsbyi (strain DSM 16790 / HBSQ001)).